The primary structure comprises 410 residues: Elongation factor Tu, chloroplastic (410 aa).

The region spanning 10-215 (KPHVNIGTIG…IVDEYIPTPQ (206 aa)) is the tr-type G domain. The G1 stretch occupies residues 19–26 (GHVDHGKT). 19–26 (GHVDHGKT) is a binding site for GTP. T26 is a binding site for Mg(2+). Residues 61–65 (GITIN) form a G2 region. The G3 stretch occupies residues 82–85 (DCPG). Residues 82–86 (DCPGH) and 137–140 (NKAD) each bind GTP. Residues 137-140 (NKAD) form a G4 region. The interval 175 to 177 (SAL) is G5.

Belongs to the TRAFAC class translation factor GTPase superfamily. Classic translation factor GTPase family. EF-Tu/EF-1A subfamily.

The protein localises to the plastid. It localises to the chloroplast. The enzyme catalyses GTP + H2O = GDP + phosphate + H(+). Functionally, GTP hydrolase that promotes the GTP-dependent binding of aminoacyl-tRNA to the A-site of ribosomes during protein biosynthesis. The polypeptide is Elongation factor Tu, chloroplastic (tufA) (Cyanidioschyzon merolae (strain NIES-3377 / 10D) (Unicellular red alga)).